Here is a 61-residue protein sequence, read N- to C-terminus: MLYFYHINILIKERKYILIYSYLNRENYQLITEESKKNDIPSIVSTGYFFAFSFPITNVLE.

This is an uncharacterized protein from Saccharomyces cerevisiae (strain ATCC 204508 / S288c) (Baker's yeast).